The following is a 242-amino-acid chain: MGRGPSIEGRKNASDAKRGKMFTKIIREISVAARAGGGDPSNNPRLRTAMDKGLSSNMSKDVMERAIKKSTGELEGVEYEEVRYEGYAPGGVAVIVDCLTDNRVRTVADVRHAFSKCGGNMGTEGSVAFMFKRLGVLSFAAGIDEDTLTDAAIDAGADDVVVYPEDGAIDVLTAPDAFAQVRDALVATGLEPAHAEITFRADNDIAVDGDTAVQVRKLLDMLEDLDDVQDVYSNVDQAALGA.

Belongs to the TACO1 family.

It is found in the cytoplasm. This Xanthomonas axonopodis pv. citri (strain 306) protein is Probable transcriptional regulatory protein XAC3151.